Reading from the N-terminus, the 198-residue chain is Protein GrpE (198 aa).

This sequence belongs to the GrpE family. As to quaternary structure, homodimer.

The protein localises to the cytoplasm. In terms of biological role, participates actively in the response to hyperosmotic and heat shock by preventing the aggregation of stress-denatured proteins, in association with DnaK and GrpE. It is the nucleotide exchange factor for DnaK and may function as a thermosensor. Unfolded proteins bind initially to DnaJ; upon interaction with the DnaJ-bound protein, DnaK hydrolyzes its bound ATP, resulting in the formation of a stable complex. GrpE releases ADP from DnaK; ATP binding to DnaK triggers the release of the substrate protein, thus completing the reaction cycle. Several rounds of ATP-dependent interactions between DnaJ, DnaK and GrpE are required for fully efficient folding. This Actinobacillus pleuropneumoniae serotype 5b (strain L20) protein is Protein GrpE.